A 55-amino-acid polypeptide reads, in one-letter code: Large ribosomal subunit protein bL33 (55 aa).

Belongs to the bacterial ribosomal protein bL33 family.

The chain is Large ribosomal subunit protein bL33 from Xanthomonas oryzae pv. oryzae (strain PXO99A).